A 150-amino-acid chain; its full sequence is Large ribosomal subunit protein uL11 (150 aa).

It belongs to the universal ribosomal protein uL11 family. As to quaternary structure, part of the ribosomal stalk of the 50S ribosomal subunit. Interacts with L10 and the large rRNA to form the base of the stalk. L10 forms an elongated spine to which L12 dimers bind in a sequential fashion forming a multimeric L10(L12)X complex. One or more lysine residues are methylated.

Forms part of the ribosomal stalk which helps the ribosome interact with GTP-bound translation factors. The polypeptide is Large ribosomal subunit protein uL11 (Cereibacter sphaeroides (strain ATCC 17025 / ATH 2.4.3) (Rhodobacter sphaeroides)).